Consider the following 372-residue polypeptide: Type II methyltransferase M1.HphI (372 aa).

An SAM-dependent MTase C5-type domain is found at 45 to 372 (LTYIDLFSGA…EAVLKMNTNE (328 aa)). Residue cysteine 122 is part of the active site.

The protein belongs to the class I-like SAM-binding methyltransferase superfamily. C5-methyltransferase family.

The catalysed reaction is a 2'-deoxycytidine in DNA + S-adenosyl-L-methionine = a 5-methyl-2'-deoxycytidine in DNA + S-adenosyl-L-homocysteine + H(+). A methylase that recognizes the double-stranded sequence 5'-GGTGA-3' and protects the DNA from cleavage by the HphI endonuclease. Probably methylates C-2 on the bottom strand. This is Type II methyltransferase M1.HphI (hphIAM) from Haemophilus parahaemolyticus.